We begin with the raw amino-acid sequence, 528 residues long: ADP,ATP carrier protein 1 (528 aa).

Transmembrane regions (helical) follow at residues 24-44 (LKKVLPMFLMFFCISFNYTIL), 63-83 (IPFIKLWLVVPSAVVFMLIYA), 93-113 (ALFFAVLSPFVVFFALFPVVI), 124-144 (AFADTLQSILPSGFMGFIAML), 149-169 (FAVFYVLSELWGSVMLSLMFW), 184-204 (FYALFGVGANVALLISGPAII), 220-240 (WGVSLYFLMAMFLCSCAIIAA), 284-304 (YMLLLALLVICYGICINLVEV), 327-347 (FSFWTGVVSVFVMLFIGGNVI), 356-376 (ALVTPIMVLVTGAVFFALVIF), 381-401 (TGLVAALGTTPLMLAVVVGAI), and 463-483 (IGAMTPFLAVALFAIIMVWLT).

It belongs to the ADP/ATP translocase tlc family.

Its subcellular location is the cell membrane. This Chlamydia trachomatis serovar D (strain ATCC VR-885 / DSM 19411 / UW-3/Cx) protein is ADP,ATP carrier protein 1 (tlcA).